Consider the following 833-residue polypeptide: Leucine--tRNA ligase (833 aa).

Positions 41–52 (PYPSGAGLHVGH) match the 'HIGH' region motif. The 'KMSKS' region signature appears at 610 to 614 (KMSKS). Position 613 (Lys613) interacts with ATP.

It belongs to the class-I aminoacyl-tRNA synthetase family.

Its subcellular location is the cytoplasm. It carries out the reaction tRNA(Leu) + L-leucine + ATP = L-leucyl-tRNA(Leu) + AMP + diphosphate. This Streptococcus uberis (strain ATCC BAA-854 / 0140J) protein is Leucine--tRNA ligase.